A 312-amino-acid chain; its full sequence is Acetyl-coenzyme A carboxylase carboxyl transferase subunit alpha (312 aa).

The CoA carboxyltransferase C-terminal domain occupies 36–286 (RLDKEVKSIY…KEYFLDALRT (251 aa)).

This sequence belongs to the AccA family. Acetyl-CoA carboxylase is a heterohexamer composed of biotin carboxyl carrier protein (AccB), biotin carboxylase (AccC) and two subunits each of ACCase subunit alpha (AccA) and ACCase subunit beta (AccD).

It localises to the cytoplasm. The catalysed reaction is N(6)-carboxybiotinyl-L-lysyl-[protein] + acetyl-CoA = N(6)-biotinyl-L-lysyl-[protein] + malonyl-CoA. It participates in lipid metabolism; malonyl-CoA biosynthesis; malonyl-CoA from acetyl-CoA: step 1/1. In terms of biological role, component of the acetyl coenzyme A carboxylase (ACC) complex. First, biotin carboxylase catalyzes the carboxylation of biotin on its carrier protein (BCCP) and then the CO(2) group is transferred by the carboxyltransferase to acetyl-CoA to form malonyl-CoA. The sequence is that of Acetyl-coenzyme A carboxylase carboxyl transferase subunit alpha from Helicobacter pylori (strain ATCC 700392 / 26695) (Campylobacter pylori).